The primary structure comprises 388 residues: Chitinase 4 (388 aa).

Residues 22 to 375 (FKTCVYFSNW…KNFVDQLGGV (354 aa)) enclose the GH18 domain. Residues N30 and N82 are each glycosylated (N-linked (GlcNAc...) asparagine). Residues 82-83 (NQ) and 109-112 (GGWG) contribute to the chitin site. N123 and N132 each carry an N-linked (GlcNAc...) asparagine glycan. E151 serves as the catalytic Proton donor. Y152 is a binding site for chitin. N-linked (GlcNAc...) asparagine glycosylation is present at N155. 208–211 (MCYD) serves as a coordination point for chitin. A glycan (N-linked (GlcNAc...) asparagine) is linked at N237. Position 350 (W350) interacts with chitin.

This sequence belongs to the glycosyl hydrolase 18 family. Chitinase class V subfamily.

Its subcellular location is the secreted. It catalyses the reaction Random endo-hydrolysis of N-acetyl-beta-D-glucosaminide (1-&gt;4)-beta-linkages in chitin and chitodextrins.. Functionally, chitinase involved in the remodeling of chitin in the fungal cell wall. Plays a role in sporulation. In Candida albicans (strain SC5314 / ATCC MYA-2876) (Yeast), this protein is Chitinase 4 (CHT4).